The primary structure comprises 435 residues: MDTIFAVSSGLLPSGVAVIRVSGPRVVDIVKTLCGCLPKARFMHHGDLIARDGSFLDSALTVFFPRPHSFTGEDCAEFHLHGGKAVVNRFLDELSTFTGCRLAEAGEFSRRAFIEGKIDLVQAEGLADLIEAETESQRRLAVMGANGHLTELYRHWRNKLMTARALIEAELDFSDEADVSNFSSDKVWQNMQELSDSLCEHIAEGERANILRDGIKVVIVGVPNSGKSSIINRLAGRPVAIVTEEEGTTRDALEVRLILGGLPVLVMDTAGFRETESKIEQLGIDIAKQHVLDADLVILVDDMKNPQKISLPNTSAEIWRVGNKLDICEGDKTRWPIQFSALNGLNFDYFLKEIESFCLHRIAEIGNIFPARKRQIQLLKEAVKEIDSSINYTFLDLSLRAEHLRRASDALGRITGDIDVEDLLDIIFSQFCIGK.

R20, E77, and K117 together coordinate (6S)-5-formyl-5,6,7,8-tetrahydrofolate. Residues 214–359 form the TrmE-type G domain; sequence GIKVVIVGVP…FLKEIESFCL (146 aa). Residues 224-229, 243-249, and 268-271 each bind GTP; these read NSGKSS, TEEEGTT, and DTAG. Residues S228 and T249 each contribute to the Mg(2+) site. K435 serves as a coordination point for (6S)-5-formyl-5,6,7,8-tetrahydrofolate.

The protein belongs to the TRAFAC class TrmE-Era-EngA-EngB-Septin-like GTPase superfamily. TrmE GTPase family. As to quaternary structure, homodimer. Heterotetramer of two MnmE and two MnmG subunits. Requires K(+) as cofactor.

It is found in the cytoplasm. Its function is as follows. Exhibits a very high intrinsic GTPase hydrolysis rate. Involved in the addition of a carboxymethylaminomethyl (cmnm) group at the wobble position (U34) of certain tRNAs, forming tRNA-cmnm(5)s(2)U34. The chain is tRNA modification GTPase MnmE from Bartonella bacilliformis (strain ATCC 35685 / KC583 / Herrer 020/F12,63).